The chain runs to 382 residues: Beta-lactamase CMY-10 (382 aa).

Positions 1-23 are cleaved as a signal peptide; sequence MQQRQSILWGAVATLMWAGLAHA. Ser88 functions as the Acyl-ester intermediate in the catalytic mechanism. Residue Ser88 participates in AMP binding. GMP-binding residues include Ser88, Gln144, Tyr174, Thr336, Ser338, and Asn363. Residues Ser88, Gln144, Tyr174, Thr336, Ser338, and Asn363 each contribute to the IMP site. Tyr174 contacts AMP. An AMP-binding site is contributed by Ser338.

The protein belongs to the class-C beta-lactamase family. As to quaternary structure, monomer.

It catalyses the reaction a beta-lactam + H2O = a substituted beta-amino acid. With respect to regulation, inhibited by various nucleotides in vitro, including adenosine 5'-(P-acetyl)monophosphate (acAMP), inosine-5'-monophosphate (IMP) and guanosine-5'-monophosphate (GMP); IMP and GMP exhibit strongest competitive inhibition. Inhibited by the beta-lactamase-blocking agent, avibactam. Inhibited by clavulanic acid. Weakly inhibited by citric acid. Its function is as follows. Class C beta-lactamase which confers resistance to penicillins and cephalosporins. Has benzylpenicillin-, ceftazidime-, nitrocefin- and imipenem-hydrolyzing activity. The protein is Beta-lactamase CMY-10 of Klebsiella aerogenes (Enterobacter aerogenes).